The sequence spans 238 residues: 1-(5-phosphoribosyl)-5-[(5-phosphoribosylamino)methylideneamino] imidazole-4-carboxamide isomerase (238 aa).

Asp8 functions as the Proton acceptor in the catalytic mechanism. Asp129 acts as the Proton donor in catalysis.

The protein belongs to the HisA/HisF family.

Its subcellular location is the cytoplasm. The enzyme catalyses 1-(5-phospho-beta-D-ribosyl)-5-[(5-phospho-beta-D-ribosylamino)methylideneamino]imidazole-4-carboxamide = 5-[(5-phospho-1-deoxy-D-ribulos-1-ylimino)methylamino]-1-(5-phospho-beta-D-ribosyl)imidazole-4-carboxamide. It participates in amino-acid biosynthesis; L-histidine biosynthesis; L-histidine from 5-phospho-alpha-D-ribose 1-diphosphate: step 4/9. The protein is 1-(5-phosphoribosyl)-5-[(5-phosphoribosylamino)methylideneamino] imidazole-4-carboxamide isomerase of Anaeromyxobacter dehalogenans (strain 2CP-C).